The primary structure comprises 400 residues: Serine/threonine transporter SstT (400 aa).

10 consecutive transmembrane segments (helical) span residues 11 to 31 (IGLV…GWLA), 45 to 65 (FVGA…MAAI), 81 to 101 (IMYM…SFLF), 138 to 158 (AIAE…GFAL), 175 to 195 (AISQ…LGLV), 213 to 233 (ILMV…PLII), 242 to 264 (YPLV…SSAA), 295 to 315 (MAGA…TLGI), 327 to 347 (LVAT…LLLI), and 354 to 374 (FSIP…IGVI).

It belongs to the dicarboxylate/amino acid:cation symporter (DAACS) (TC 2.A.23) family.

Its subcellular location is the cell inner membrane. It catalyses the reaction L-serine(in) + Na(+)(in) = L-serine(out) + Na(+)(out). The enzyme catalyses L-threonine(in) + Na(+)(in) = L-threonine(out) + Na(+)(out). Functionally, involved in the import of serine and threonine into the cell, with the concomitant import of sodium (symport system). In Psychrobacter cryohalolentis (strain ATCC BAA-1226 / DSM 17306 / VKM B-2378 / K5), this protein is Serine/threonine transporter SstT.